A 297-amino-acid chain; its full sequence is T-cell leukemia homeobox protein 3 (297 aa).

Residues 1 to 68 (MEPAAGAQGP…LGGPRGGAPY (68 aa)) form a disordered region. The segment covering 32–52 (APPPPPPPPPPPPPPPPPPRG) has biased composition (pro residues). A DNA-binding region (homeobox) is located at residues 172–231 (RKKPRTSFSRVQICELEKRFHRQKYLASAERAALAKSLKMTDAQVKTWFQNRRTKWRRQT).

In terms of tissue distribution, expression is restricted to neurons in the peripheral and central nervous system.

The protein localises to the nucleus. Its function is as follows. Seems to be involved in the development of cranial sensory innervation from peripheral ganglia. The protein is T-cell leukemia homeobox protein 3 (TLX3) of Gallus gallus (Chicken).